The primary structure comprises 1380 residues: Hepatocyte growth factor receptor (1380 aa).

The first 24 residues, Met-1–Gly-24, serve as a signal peptide directing secretion. At Glu-25–Thr-931 the chain is on the extracellular side. A Sema domain is found at Arg-27–Leu-513. N-linked (GlcNAc...) asparagine glycosylation is present at Asn-45. 4 disulfide bridges follow: Cys-95-Cys-101, Cys-98-Cys-156, Cys-129-Cys-137, and Cys-170-Cys-173. The N-linked (GlcNAc...) asparagine glycan is linked to Asn-200. 2 cysteine pairs are disulfide-bonded: Cys-296–Cys-361 and Cys-383–Cys-395. Residues Asn-397 and Asn-403 are each glycosylated (N-linked (GlcNAc...) asparagine). 4 disulfide bridges follow: Cys-518–Cys-536, Cys-524–Cys-559, Cys-527–Cys-543, and Cys-539–Cys-549. An N-linked (GlcNAc...) asparagine glycan is attached at Asn-551. 3 IPT/TIG domains span residues Pro-561–Val-654, Pro-656–Gln-738, and Pro-741–Val-835. Thr-580 carries an O-linked (Man) threonine glycan. N-linked (GlcNAc...) asparagine glycans are attached at residues Asn-592, Asn-605, and Asn-633. Residues Thr-675 and Thr-760 are each glycosylated (O-linked (Man) threonine). Asn-784, Asn-878, and Asn-929 each carry an N-linked (GlcNAc...) asparagine glycan. The chain crosses the membrane as a helical span at residues Gly-932–Leu-954. Over Lys-955–Thr-1380 the chain is Cytoplasmic. A Phosphoserine modification is found at Ser-965. Thr-976 bears the Phosphothreonine mark. A phosphoserine mark is found at Ser-989, Ser-996, and Ser-999. At Tyr-1002 the chain carries Phosphotyrosine. A Protein kinase domain is found at Val-1077–Ile-1344. ATP-binding positions include Ile-1083–Val-1091 and Lys-1109. Residue Asp-1203 is the Proton acceptor of the active site. Residues Leu-1211–Thr-1380 are interaction with RANBP9. A Phosphotyrosine modification is found at Tyr-1229. Phosphotyrosine; by autocatalysis occurs at positions 1233 and 1234. At Thr-1288 the chain carries Phosphothreonine. Residues Trp-1319 to Val-1358 form an interaction with MUC20 region. A phosphotyrosine; by autocatalysis mark is found at Tyr-1348 and Tyr-1355. The residue at position 1364 (Tyr-1364) is a Phosphotyrosine.

It belongs to the protein kinase superfamily. Tyr protein kinase family. Heterodimer made of an alpha chain (50 kDa) and a beta chain (145 kDa) which are disulfide linked. Binds PLXNB1. Interacts when phosphorylated with downstream effectors including STAT3, PIK3R1, SRC, PCLG1, GRB2 and GAB1. Interacts with SPSB1, SPSB2 and SPSB4. Interacts with INPP5D/SHIP1. When phosphorylated at Tyr-1355, interacts with INPPL1/SHIP2. Interacts with RANBP9 and RANBP10, as well as SPSB1, SPSB2, SPSB3 and SPSB4. SPSB1 binding occurs in the presence and in the absence of HGF, however HGF treatment has a positive effect on this interaction. Interacts with MUC20; prevents interaction with GRB2 and suppresses hepatocyte growth factor-induced cell proliferation. Interacts with GRB10. Interacts with PTPN1 and PTPN2. Interacts with HSP90AA1 and HSP90AB1; the interaction suppresses MET kinase activity. Interacts with tensin TNS3. Interacts (when phosphorylated) with tensin TNS4 (via SH2 domain); the interaction increases MET protein stability by inhibiting MET endocytosis and subsequent lysosomal degradation. Post-translationally, autophosphorylated in response to ligand binding on Tyr-1233 and Tyr-1234 in the kinase domain leading to further phosphorylation of Tyr-1348 and Tyr-1355 in the C-terminal multifunctional docking site. Dephosphorylated by PTPRJ at Tyr-1348 and Tyr-1364. Dephosphorylated by PTPN1 and PTPN2. Ubiquitinated. Ubiquitination by CBL regulates the receptor stability and activity through proteasomal degradation. In terms of processing, O-mannosylation of IPT/TIG domains by TMEM260 is required for protein maturation. O-mannosylated residues are composed of single mannose glycans that are not elongated or modified.

Its subcellular location is the membrane. The enzyme catalyses L-tyrosyl-[protein] + ATP = O-phospho-L-tyrosyl-[protein] + ADP + H(+). Its activity is regulated as follows. In its inactive state, the C-terminal tail interacts with the catalytic domain and inhibits the kinase activity. Upon ligand binding, the C-terminal tail is displaced and becomes phosphorylated, thus increasing the kinase activity. Its function is as follows. Receptor tyrosine kinase that transduces signals from the extracellular matrix into the cytoplasm by binding to hepatocyte growth factor/HGF ligand. Regulates many physiological processes including proliferation, scattering, morphogenesis and survival. Ligand binding at the cell surface induces autophosphorylation of MET on its intracellular domain that provides docking sites for downstream signaling molecules. Following activation by ligand, interacts with the PI3-kinase subunit PIK3R1, PLCG1, SRC, GRB2, STAT3 or the adapter GAB1. Recruitment of these downstream effectors by MET leads to the activation of several signaling cascades including the RAS-ERK, PI3 kinase-AKT, or PLCgamma-PKC. The RAS-ERK activation is associated with the morphogenetic effects while PI3K/AKT coordinates prosurvival effects. During embryonic development, MET signaling plays a role in gastrulation, development and migration of muscles and neuronal precursors, angiogenesis and kidney formation. In adults, participates in wound healing as well as organ regeneration and tissue remodeling. Also promotes differentiation and proliferation of hematopoietic cells. The sequence is that of Hepatocyte growth factor receptor (MET) from Echinops telfairi (Lesser hedgehog tenrec).